Reading from the N-terminus, the 833-residue chain is MSFYNHKEIEPKWQGYWAEHHTFKTGTDASKPKFYALDMFPYPSGAGLHVGHPEGYTATDILSRYKRAQGYNVLHPMGWDAFGLPAEQYAMDTGNDPAEFTAENIANFKRQINALGFSYDWDREVNTTDPNYYKWTQWIFTKLYEKGLAYEAEVPVNWVEELGTAIANEEVLPDGTSERGGYPVVRKPMRQWMLKITAYAERLLNDLDELDWSESIKDMQRNWIGKSTGANVTFKVKGTDKEFTVFTTRPDTLFGATFTVLAPEHELVDAITSSEQAEAVADYKHQASLKSDLVRTDLAKEKTGVWTGAYAINPVNGKEMPIWIADYVLASYGTGAVMAVPAHDQRDWEFAKQFDLPIVEVLEGGNVEEAAYTEDGLHVNSDFLDGLNKEDAIAKIVAYLEEKGCGQEKVTYRLRDWLFSRQRYWGEPIPIIHWEDGTSTAVPETELPLVLPVTKDIRPSGTGESPLANLTDWLEVTREDGVKGRRETNTMPQWAGSSWYYLRYIDPHNTEKLADEDLLKQWLPVDIYVGGAEHAVLHLLYARFWHKFLYDLGVVPTKEPFQKLFNQGMILGTSYRDHRGALVTTDKVEKRDGSFFHVETGEELEQAPAKMSKSLKNVVNPDDVVEQYGADTLRVYEMFMGPLDASIAWSEEGLEGSRKFLDRVYRLITSKEILAENNGALDKAYNETVKAVTEQIESLKFNTAIAQLMVFVNAANKEDKLYIDYAKGFIQLIAPFAPHLAEELWQTVAETGESISYVAWPTWDESKLVEDEIEIVVQIKGKVRAKLMVAKDLSREELQEIALADEKVKAEIDGKEIVKVISVPNKLVNIVVK.

The 'HIGH' region signature appears at 41 to 52 (PYPSGAGLHVGH). Residues 610 to 614 (KMSKS) carry the 'KMSKS' region motif. An ATP-binding site is contributed by Lys613.

Belongs to the class-I aminoacyl-tRNA synthetase family.

It is found in the cytoplasm. The catalysed reaction is tRNA(Leu) + L-leucine + ATP = L-leucyl-tRNA(Leu) + AMP + diphosphate. This Streptococcus pneumoniae (strain Taiwan19F-14) protein is Leucine--tRNA ligase.